Consider the following 258-residue polypeptide: Enterotoxin type D (258 aa).

The signal sequence occupies residues 1-25 (MKKFNILIALLFFTSLVISPLNVKA). Zn(2+) is bound by residues D212, H248, H250, and D252.

Belongs to the staphylococcal/streptococcal toxin family. As to quaternary structure, homodimer; zinc-dependent. Interacts with MHC class II molecules composed of alpha/HLA-DRA and beta/HLA-DRB1 chains. Zn(2+) serves as cofactor.

Its subcellular location is the secreted. In terms of biological role, staphylococcal enterotoxin that activates the host immune system by binding as unprocessed molecules to major histocompatibility (MHC) complex class II and T-cell receptor (TCR) molecules. In turn, this ternary complex activates a large number of T-lymphocytes initiating a systemic release of pro-inflammatory cytokines. In addition, induces B-cell proliferation and differentiation in the presence of T-cells. Causes also the intoxication staphylococcal food poisoning syndrome. The polypeptide is Enterotoxin type D (entD) (Staphylococcus aureus).